Consider the following 335-residue polypeptide: Tetraacyldisaccharide 4'-kinase (335 aa).

58–65 (TAGGSGKT) is an ATP binding site.

The protein belongs to the LpxK family.

It carries out the reaction a lipid A disaccharide + ATP = a lipid IVA + ADP + H(+). Its pathway is glycolipid biosynthesis; lipid IV(A) biosynthesis; lipid IV(A) from (3R)-3-hydroxytetradecanoyl-[acyl-carrier-protein] and UDP-N-acetyl-alpha-D-glucosamine: step 6/6. Functionally, transfers the gamma-phosphate of ATP to the 4'-position of a tetraacyldisaccharide 1-phosphate intermediate (termed DS-1-P) to form tetraacyldisaccharide 1,4'-bis-phosphate (lipid IVA). This Shewanella frigidimarina (strain NCIMB 400) protein is Tetraacyldisaccharide 4'-kinase.